Consider the following 796-residue polypeptide: Polyribonucleotide nucleotidyltransferase (796 aa).

Residues Asp490 and Asp496 each contribute to the Mg(2+) site. The KH domain occupies 557 to 616 (PRIESIFINKDKIRNVIGSGGKNIRDICEKTGAKIEIIQDGTVMIYAVNNEAVEYAKSMI). Positions 626–693 (GKVFEGTVVE…DREHVQLSMR (68 aa)) constitute an S1 motif domain. The segment covering 714 to 736 (SFSDDSSSSGTSSSGSSFKESYS) has biased composition (low complexity). The disordered stretch occupies residues 714–796 (SFSDDSSSSG…HEVPRKPRFF (83 aa)). The segment covering 740-755 (HGSHEKRRSGGSRSSR) has biased composition (basic residues). The segment covering 771 to 784 (SDFGNNNRSFSNSR) has biased composition (low complexity). A compositionally biased stretch (basic and acidic residues) spans 785-796 (NGHEVPRKPRFF).

It belongs to the polyribonucleotide nucleotidyltransferase family. The cofactor is Mg(2+).

Its subcellular location is the cytoplasm. It catalyses the reaction RNA(n+1) + phosphate = RNA(n) + a ribonucleoside 5'-diphosphate. Involved in mRNA degradation. Catalyzes the phosphorolysis of single-stranded polyribonucleotides processively in the 3'- to 5'-direction. This is Polyribonucleotide nucleotidyltransferase from Ehrlichia canis (strain Jake).